Consider the following 190-residue polypeptide: Small ribosomal subunit protein mS23 (190 aa).

Position 2 is an N-acetylalanine (Ala-2). Lys-102 bears the N6-acetyllysine mark. The interval 139–190 (RTQHGGSHVSRKSEHLSVRPQTALEENETQKEVPQDQHLEAPADQSKGLLPP) is disordered. Over residues 166–179 (ETQKEVPQDQHLEA) the composition is skewed to basic and acidic residues.

It belongs to the mitochondrion-specific ribosomal protein mS23 family. As to quaternary structure, component of the mitochondrial small ribosomal subunit (mt-SSU). Mature mammalian 55S mitochondrial ribosomes consist of a small (28S) and a large (39S) subunit. The 28S small subunit contains a 12S ribosomal RNA (12S mt-rRNA) and 30 different proteins. The 39S large subunit contains a 16S rRNA (16S mt-rRNA), a copy of mitochondrial valine transfer RNA (mt-tRNA(Val)), which plays an integral structural role, and 52 different proteins.

It localises to the mitochondrion. This Homo sapiens (Human) protein is Small ribosomal subunit protein mS23 (MRPS23).